The sequence spans 430 residues: Glutamate-1-semialdehyde 2,1-aminomutase (430 aa).

Lys267 carries the N6-(pyridoxal phosphate)lysine modification.

Belongs to the class-III pyridoxal-phosphate-dependent aminotransferase family. HemL subfamily. In terms of assembly, homodimer. The cofactor is pyridoxal 5'-phosphate.

It is found in the cytoplasm. It catalyses the reaction (S)-4-amino-5-oxopentanoate = 5-aminolevulinate. Its pathway is porphyrin-containing compound metabolism; protoporphyrin-IX biosynthesis; 5-aminolevulinate from L-glutamyl-tRNA(Glu): step 2/2. This Lawsonia intracellularis (strain PHE/MN1-00) protein is Glutamate-1-semialdehyde 2,1-aminomutase.